A 336-amino-acid polypeptide reads, in one-letter code: tRNA(Ile)-lysidine synthase (336 aa).

Residue 21–26 participates in ATP binding; that stretch reads SGGLDS.

The protein belongs to the tRNA(Ile)-lysidine synthase family.

It is found in the cytoplasm. The catalysed reaction is cytidine(34) in tRNA(Ile2) + L-lysine + ATP = lysidine(34) in tRNA(Ile2) + AMP + diphosphate + H(+). In terms of biological role, ligates lysine onto the cytidine present at position 34 of the AUA codon-specific tRNA(Ile) that contains the anticodon CAU, in an ATP-dependent manner. Cytidine is converted to lysidine, thus changing the amino acid specificity of the tRNA from methionine to isoleucine. This Helicobacter pylori (strain ATCC 700392 / 26695) (Campylobacter pylori) protein is tRNA(Ile)-lysidine synthase.